A 130-amino-acid chain; its full sequence is Small ribosomal subunit protein uS9 (130 aa).

A disordered region spans residues 105–130 (TRDARMKERKKPGLKKARKASQFSKR). Residues 111–130 (KERKKPGLKKARKASQFSKR) are compositionally biased toward basic residues.

This sequence belongs to the universal ribosomal protein uS9 family.

This chain is Small ribosomal subunit protein uS9, found in Lactiplantibacillus plantarum (strain ATCC BAA-793 / NCIMB 8826 / WCFS1) (Lactobacillus plantarum).